The sequence spans 323 residues: Cytochrome c biogenesis protein CcsA (323 aa).

8 consecutive transmembrane segments (helical) span residues 17–37, 44–64, 68–88, 98–118, 143–163, 229–249, 262–279, and 291–311; these read VVSI…IVGF, GMII…FFSG, FSDL…FYMV, LSTI…SGLL, MILG…ILVI, IISL…VWAN, ETWA…LHSR, and IVAS…NLLG.

The protein belongs to the CcmF/CycK/Ccl1/NrfE/CcsA family. As to quaternary structure, may interact with Ccs1.

It localises to the plastid. The protein resides in the chloroplast thylakoid membrane. Its function is as follows. Required during biogenesis of c-type cytochromes (cytochrome c6 and cytochrome f) at the step of heme attachment. This Lotus japonicus (Lotus corniculatus var. japonicus) protein is Cytochrome c biogenesis protein CcsA.